We begin with the raw amino-acid sequence, 398 residues long: Na(+)/H(+) antiporter NhaA (398 aa).

11 consecutive transmembrane segments (helical) span residues 14-34 (AAGV…NWSV), 60-80 (LLLW…GLEV), 96-116 (MLPL…FLLF), 125-145 (VGWA…LTLL), 155-175 (VFLL…IALF), 179-199 (QIFW…AYLN), 214-234 (IVLW…GVIV), 263-283 (FLII…GIVL), 292-312 (LGIA…LSWL), 330-350 (IVAV…ITLL), and 362-382 (YAKL…YLAL).

The protein belongs to the NhaA Na(+)/H(+) (TC 2.A.33) antiporter family.

It is found in the cell inner membrane. The catalysed reaction is Na(+)(in) + 2 H(+)(out) = Na(+)(out) + 2 H(+)(in). Na(+)/H(+) antiporter that extrudes sodium in exchange for external protons. This is Na(+)/H(+) antiporter NhaA from Pectobacterium carotovorum subsp. carotovorum (strain PC1).